The sequence spans 230 residues: Ion-translocating oxidoreductase complex subunit E (230 aa).

The next 6 membrane-spanning stretches (helical) occupy residues 18 to 38 (ALVQ…ITNA), 39 to 59 (LGLG…VSLI), 69 to 89 (IPVF…LMNA), 93 to 113 (GLYL…IIIG), 124 to 144 (VLPA…VLVV), and 182 to 202 (SFLL…LIAL).

This sequence belongs to the NqrDE/RnfAE family. In terms of assembly, the complex is composed of six subunits: RnfA, RnfB, RnfC, RnfD, RnfE and RnfG.

It is found in the cell inner membrane. Part of a membrane-bound complex that couples electron transfer with translocation of ions across the membrane. This is Ion-translocating oxidoreductase complex subunit E from Vibrio parahaemolyticus serotype O3:K6 (strain RIMD 2210633).